Consider the following 419-residue polypeptide: Maltoporin 2 (419 aa).

Residues 1 to 23 (MKTSLRTLSVALAAALVSPSVLA) form the signal peptide.

This sequence belongs to the porin LamB (TC 1.B.3) family. In terms of assembly, homotrimer formed of three 18-stranded antiparallel beta-barrels, containing three independent channels.

It localises to the cell outer membrane. It catalyses the reaction beta-maltose(in) = beta-maltose(out). Involved in the transport of maltose and maltodextrins. The protein is Maltoporin 2 of Yersinia pestis bv. Antiqua (strain Antiqua).